A 310-amino-acid polypeptide reads, in one-letter code: Olfactory receptor 10G2 (310 aa).

Over 1-29 (MGKTKNTSLDAVVTDFILLGLSHPPNLRS) the chain is Extracellular. Asn6 is a glycosylation site (N-linked (GlcNAc...) asparagine). A helical transmembrane segment spans residues 30–50 (LLFLVFFIIYILTQLGNLLIL). Residues 51–58 (LTMWADPK) are Cytoplasmic-facing. The helical transmembrane segment at 59–80 (LCARPMYILLGVLSFLDMWLSS) threads the bilayer. At 81-104 (VTVPLLILDFTPSIKAIPFGGCVA) the chain is on the extracellular side. A disulfide bond links Cys102 and Cys194. Residues 105 to 125 (QLYFFHFLGSTQCFLYTLMAY) traverse the membrane as a helical segment. At 126-144 (DRYLAICQPLRYPVLMNGR) the chain is on the cytoplasmic side. A helical transmembrane segment spans residues 145 to 165 (LCTVLVAGAWVAGSMHGSIQA). Residues 166 to 202 (TLTFRLPYCGPNQVDYFICDIPAVLRLACADTTVNEL) are Extracellular-facing. Residues 203-222 (VTFVDVGVVAASCFMLILLS) form a helical membrane-spanning segment. Residues 223-242 (YANIVNAILKIRTTDGRRRA) are Cytoplasmic-facing. The chain crosses the membrane as a helical span at residues 243 to 263 (FSTCGSHLIVVTVYYVPCIFI). Residues 264–274 (YLRAGSKDPLD) lie on the Extracellular side of the membrane. Residues 275-295 (GAAAVFYTVVTPLLNPLIYTL) form a helical membrane-spanning segment. Residues 296 to 310 (RNQEVKSALKRITAG) are Cytoplasmic-facing.

It belongs to the G-protein coupled receptor 1 family.

It is found in the cell membrane. In terms of biological role, odorant receptor. The chain is Olfactory receptor 10G2 (OR10G2) from Homo sapiens (Human).